Reading from the N-terminus, the 782-residue chain is Coiled-coil alpha-helical rod protein 1 (782 aa).

Basic and acidic residues-rich tracts occupy residues 62 to 74 and 208 to 218; these read ERDVSSDRQEPGR and ETRRAGEAKEL. Disordered stretches follow at residues 62–82 and 185–218; these read ERDVSSDRQEPGRRGRSWGLE and AHKEALSSLTSKAEGLEKSLSSLETRRAGEAKEL. Coiled-coil stretches lie at residues 82–314, 344–398, and 498–691; these read EGSQ…ELTR, LMVQ…EVER, and VTDV…QQEG.

It is found in the cytoplasm. It localises to the nucleus. Functionally, may be a regulator of keratinocyte proliferation or differentiation. The sequence is that of Coiled-coil alpha-helical rod protein 1 (CCHCR1) from Gorilla gorilla gorilla (Western lowland gorilla).